Here is a 266-residue protein sequence, read N- to C-terminus: MPAITLTTLQSLKQKGEKITMLTCYDATFAHACNEAGVEVLLVGDSLGMVLQGHDSTLPVTTAEMAYHVASVKRGNSDALILADLPFMANATLEQTMTNSALLMQAGAHMVKVEGALWLADSIRLLAERGVPVCAHMGLTPQAVNILGGYKVQGRNENQARQMRADAISLEQAGAAMLLLECVPSELAAEITQAVKIPVIGIGAGSDTDGQVLVLHDMLGLSISGRVPKFVKNFMQGQDSIQSALKAYVSEVKATTFPGIEHGFSA.

Mg(2+)-binding residues include D45 and D84. 3-methyl-2-oxobutanoate-binding positions include 45–46 (DS), D84, and K112. E114 contacts Mg(2+). Catalysis depends on E181, which acts as the Proton acceptor.

The protein belongs to the PanB family. In terms of assembly, homodecamer; pentamer of dimers. It depends on Mg(2+) as a cofactor.

The protein resides in the cytoplasm. The enzyme catalyses 3-methyl-2-oxobutanoate + (6R)-5,10-methylene-5,6,7,8-tetrahydrofolate + H2O = 2-dehydropantoate + (6S)-5,6,7,8-tetrahydrofolate. The protein operates within cofactor biosynthesis; (R)-pantothenate biosynthesis; (R)-pantoate from 3-methyl-2-oxobutanoate: step 1/2. Catalyzes the reversible reaction in which hydroxymethyl group from 5,10-methylenetetrahydrofolate is transferred onto alpha-ketoisovalerate to form ketopantoate. In Pseudomonas fluorescens (strain Pf0-1), this protein is 3-methyl-2-oxobutanoate hydroxymethyltransferase.